A 236-amino-acid polypeptide reads, in one-letter code: NLP effector protein 3 (236 aa).

Positions 1–19 (MNLLGFLAVVALSTASVQA) are cleaved as a signal peptide. The short motif at 103 to 113 (AIMYSWYFPKD) is the Conserved undecapeptide motif I element. Residues 120–126 (GHRHDWE) carry the Hepta-peptide GHRHDWE motif II motif.

Belongs to the Necrosis inducing protein (NPP1) family.

The protein resides in the secreted. Secreted effector that contributes to virulence during infection by P.capsici. Induces distinct chlorosis at 3 days after inoculation of host C.annuum leaves, and all the chlorotic areas gradually turn brown and become moderately necrotic at 7 days after inoculation. Leads only to chlorotic areas, without necrosis at 7 days after non-host N.benthamiana leaves infection. Induces cell death in hot pepper. The chain is NLP effector protein 3 from Phytophthora capsici.